Here is a 434-residue protein sequence, read N- to C-terminus: Histidinol dehydrogenase (434 aa).

Tyrosine 130, glutamine 188, and asparagine 211 together coordinate NAD(+). Substrate contacts are provided by serine 237, glutamine 259, and histidine 262. Zn(2+) is bound by residues glutamine 259 and histidine 262. Active-site proton acceptor residues include glutamate 326 and histidine 327. Substrate is bound by residues histidine 327, aspartate 360, glutamate 414, and histidine 419. Aspartate 360 contacts Zn(2+). Histidine 419 contacts Zn(2+).

Belongs to the histidinol dehydrogenase family. In terms of assembly, homodimer. The cofactor is Zn(2+).

It carries out the reaction L-histidinol + 2 NAD(+) + H2O = L-histidine + 2 NADH + 3 H(+). Its pathway is amino-acid biosynthesis; L-histidine biosynthesis; L-histidine from 5-phospho-alpha-D-ribose 1-diphosphate: step 9/9. Its function is as follows. Catalyzes the sequential NAD-dependent oxidations of L-histidinol to L-histidinaldehyde and then to L-histidine. This chain is Histidinol dehydrogenase, found in Shigella flexneri.